The following is a 44-amino-acid chain: Photosystem I reaction center subunit IX (44 aa).

A helical membrane pass occupies residues 7-27; that stretch reads YLSTAPVLAISWLIFVAGLLI.

It belongs to the PsaJ family.

The protein localises to the plastid. It localises to the chloroplast thylakoid membrane. In terms of biological role, may help in the organization of the PsaE and PsaF subunits. The polypeptide is Photosystem I reaction center subunit IX (Larix decidua (European larch)).